Here is a 344-residue protein sequence, read N- to C-terminus: Dimethyladenosine transferase 1, mitochondrial (344 aa).

Residues 1-27 (MATPGALAKFRLPPLPTIGEIVKLFNL) constitute a mitochondrion transit peptide. Positions 36, 38, 63, 85, 86, 111, 112, and 141 each coordinate S-adenosyl-L-methionine.

Belongs to the class I-like SAM-binding methyltransferase superfamily. rRNA adenine N(6)-methyltransferase family. KsgA subfamily.

The protein localises to the mitochondrion. The enzyme catalyses adenosine(N)/adenosine(N+1) in rRNA + 4 S-adenosyl-L-methionine = N(6)-dimethyladenosine(N)/N(6)-dimethyladenosine(N+1) in rRNA + 4 S-adenosyl-L-homocysteine + 4 H(+). Mitochondrial methyltransferase which uses S-adenosyl methionine to dimethylate two highly conserved adjacent adenosine residues (A1583 and A1584) within the loop of helix 45 at the 3-prime end of 12S rRNA, thereby regulating the assembly or stability of the small subunit of the mitochondrial ribosome. Also required for basal transcription of mitochondrial DNA, probably via its interaction with POLRMT and TFAM. Stimulates transcription independently of the methyltransferase activity. This is Dimethyladenosine transferase 1, mitochondrial (tfb1m.L) from Xenopus laevis (African clawed frog).